A 506-amino-acid polypeptide reads, in one-letter code: ATP synthase subunit alpha (506 aa).

170 to 177 contributes to the ATP binding site; that stretch reads GDRQTGKT.

Belongs to the ATPase alpha/beta chains family. As to quaternary structure, F-type ATPases have 2 components, CF(1) - the catalytic core - and CF(0) - the membrane proton channel. CF(1) has five subunits: alpha(3), beta(3), gamma(1), delta(1), epsilon(1). CF(0) has four main subunits: a(1), b(1), b'(1) and c(9-12).

Its subcellular location is the cellular thylakoid membrane. The enzyme catalyses ATP + H2O + 4 H(+)(in) = ADP + phosphate + 5 H(+)(out). Produces ATP from ADP in the presence of a proton gradient across the membrane. The alpha chain is a regulatory subunit. In Synechococcus sp. (strain WH7803), this protein is ATP synthase subunit alpha.